Here is a 158-residue protein sequence, read N- to C-terminus: Pyruvoyl-dependent arginine decarboxylase (158 aa).

At serine 44 the chain carries Pyruvic acid (Ser).

It belongs to the PdaD family. The cofactor is pyruvate.

It carries out the reaction L-arginine + H(+) = agmatine + CO2. This chain is Pyruvoyl-dependent arginine decarboxylase, found in Thermococcus sibiricus (strain DSM 12597 / MM 739).